The chain runs to 669 residues: UvrABC system protein B (669 aa).

The region spanning 27–414 is the Helicase ATP-binding domain; sequence ESLQGEHKFQ…EARVIEQVIR (388 aa). 40 to 47 contributes to the ATP binding site; it reads GATGTGKT. Positions 93-116 match the Beta-hairpin motif; sequence YYDYYQPEAYIPVTDTYIEKTASI. Residues 431–597 form the Helicase C-terminal domain; it reads QVDDLYGEIQ…PINKRANNAI (167 aa). One can recognise a UVR domain in the interval 628–663; it reads PDLIQQLEEKMQEAAKKQEFEVAAIYRDRIQHLRDR.

The protein belongs to the UvrB family. Forms a heterotetramer with UvrA during the search for lesions. Interacts with UvrC in an incision complex.

It is found in the cytoplasm. In terms of biological role, the UvrABC repair system catalyzes the recognition and processing of DNA lesions. A damage recognition complex composed of 2 UvrA and 2 UvrB subunits scans DNA for abnormalities. Upon binding of the UvrA(2)B(2) complex to a putative damaged site, the DNA wraps around one UvrB monomer. DNA wrap is dependent on ATP binding by UvrB and probably causes local melting of the DNA helix, facilitating insertion of UvrB beta-hairpin between the DNA strands. Then UvrB probes one DNA strand for the presence of a lesion. If a lesion is found the UvrA subunits dissociate and the UvrB-DNA preincision complex is formed. This complex is subsequently bound by UvrC and the second UvrB is released. If no lesion is found, the DNA wraps around the other UvrB subunit that will check the other stand for damage. The sequence is that of UvrABC system protein B from Synechocystis sp. (strain ATCC 27184 / PCC 6803 / Kazusa).